Reading from the N-terminus, the 273-residue chain is Putative methyltransferase Cher3 (273 aa).

The CheR-type methyltransferase domain occupies 1–273 (MTSERNTDIE…VKPQRIFRKS (273 aa)). S-adenosyl-L-methionine-binding positions include Ser76, Arg80, Glu114, Asp137, 199-200 (SL), and 215-216 (RN).

The protein is Putative methyltransferase Cher3 (cheR3) of Pseudomonas putida (strain ATCC 47054 / DSM 6125 / CFBP 8728 / NCIMB 11950 / KT2440).